We begin with the raw amino-acid sequence, 278 residues long: S-formylglutathione hydrolase YeiG (278 aa).

Catalysis depends on charge relay system residues S145, D223, and H256.

It belongs to the esterase D family.

The enzyme catalyses S-formylglutathione + H2O = formate + glutathione + H(+). Functionally, serine hydrolase involved in the detoxification of formaldehyde. Hydrolyzes S-formylglutathione to glutathione and formate. This chain is S-formylglutathione hydrolase YeiG (yeiG), found in Shigella flexneri serotype 5b (strain 8401).